Consider the following 188-residue polypeptide: Scytalone dehydratase (188 aa).

Positions 27, 47, and 50 each coordinate substrate. Active-site residues include H82 and H107. A substrate-binding site is contributed by N128.

The protein belongs to the scytalone dehydratase family. As to quaternary structure, homotrimer. Each subunit contains an active site, located in the central part of the hydrophobic core of the monomer, which functions independently.

The protein localises to the endosome. The catalysed reaction is scytalone = 1,3,8-trihydroxynaphthalene + H2O. It functions in the pathway pigment biosynthesis; melanin biosynthesis. Carpropamid acts as an efficient inhibitor of scytalone dehydratase activity. Functionally, scytalone dehydratase; part of the gene cluster that mediates the biosynthesis of dihydroxynaphthalene (DHN)-melanin, a bluish-green pigment and a structural component of the conidial wall. Within the pathway, catalyzes the dehydration of scytalone as well as of vermelone. The sequence is that of Scytalone dehydratase from Colletotrichum orbiculare (strain 104-T / ATCC 96160 / CBS 514.97 / LARS 414 / MAFF 240422) (Cucumber anthracnose fungus).